The primary structure comprises 197 residues: Holliday junction branch migration complex subunit RuvA (197 aa).

The segment at 1–63 (MISSLRGEVL…EDSMTLYGFV (63 aa)) is domain I. Residues 64–139 (DGETRDLFLT…KVGPAGSAAT (76 aa)) are domain II. The flexible linker stretch occupies residues 139–143 (TAPAV). The segment at 144–197 (NGHTVRAPVVEALVGLGFAAKQAEEATDKVLAGDGEATTSSALRAALSLLGKAR) is domain III.

This sequence belongs to the RuvA family. As to quaternary structure, homotetramer. Forms an RuvA(8)-RuvB(12)-Holliday junction (HJ) complex. HJ DNA is sandwiched between 2 RuvA tetramers; dsDNA enters through RuvA and exits via RuvB. An RuvB hexamer assembles on each DNA strand where it exits the tetramer. Each RuvB hexamer is contacted by two RuvA subunits (via domain III) on 2 adjacent RuvB subunits; this complex drives branch migration. In the full resolvosome a probable DNA-RuvA(4)-RuvB(12)-RuvC(2) complex forms which resolves the HJ.

It is found in the cytoplasm. Functionally, the RuvA-RuvB-RuvC complex processes Holliday junction (HJ) DNA during genetic recombination and DNA repair, while the RuvA-RuvB complex plays an important role in the rescue of blocked DNA replication forks via replication fork reversal (RFR). RuvA specifically binds to HJ cruciform DNA, conferring on it an open structure. The RuvB hexamer acts as an ATP-dependent pump, pulling dsDNA into and through the RuvAB complex. HJ branch migration allows RuvC to scan DNA until it finds its consensus sequence, where it cleaves and resolves the cruciform DNA. The polypeptide is Holliday junction branch migration complex subunit RuvA (Mycobacterium marinum (strain ATCC BAA-535 / M)).